Reading from the N-terminus, the 127-residue chain is MNQTVKVKKKKKTITLGVVHIRASFNNTIVTFTDIQGNTIASASAGGNGFKGARKATPYAAQVTIDRASEKAKEYGLKTISIRIGGPGAQRESAMRALFGQNFVVTSILDVSSIAHNGVRPPKRRRV.

Belongs to the universal ribosomal protein uS11 family. As to quaternary structure, part of the 30S ribosomal subunit. Interacts with proteins S7 and S18. Binds to IF-3.

In terms of biological role, located on the platform of the 30S subunit, it bridges several disparate RNA helices of the 16S rRNA. Forms part of the Shine-Dalgarno cleft in the 70S ribosome. The protein is Small ribosomal subunit protein uS11 of Rickettsia africae (strain ESF-5).